A 469-amino-acid polypeptide reads, in one-letter code: Trigger factor (469 aa).

The PPIase FKBP-type domain occupies 162-243 (GDFVSIDLSA…VKSVKERELP (82 aa)). Residues 429–469 (NTIDTSEFFGKHAQSDKADQKTEEADPNSDAIDEEVDEAAE) form a disordered region. Residues 437–452 (FGKHAQSDKADQKTEE) are compositionally biased toward basic and acidic residues. Residues 453 to 469 (ADPNSDAIDEEVDEAAE) are compositionally biased toward acidic residues.

It belongs to the FKBP-type PPIase family. Tig subfamily.

The protein localises to the cytoplasm. It catalyses the reaction [protein]-peptidylproline (omega=180) = [protein]-peptidylproline (omega=0). Functionally, involved in protein export. Acts as a chaperone by maintaining the newly synthesized protein in an open conformation. Functions as a peptidyl-prolyl cis-trans isomerase. In Mycobacterium leprae (strain Br4923), this protein is Trigger factor.